Here is a 61-residue protein sequence, read N- to C-terminus: Disintegrin rubistatin (61 aa).

In terms of domain architecture, Disintegrin spans asparagine 1–glycine 61. Cystine bridges form between cysteine 3/cysteine 26, cysteine 17/cysteine 23, cysteine 22/cysteine 47, and cysteine 35/cysteine 54. A Cell attachment site; atypical (MVD) motif is present at residues methionine 39–aspartate 41.

The protein belongs to the venom metalloproteinase (M12B) family. P-II subfamily. P-IIa sub-subfamily. In terms of assembly, monomer. As to expression, expressed by the venom gland.

It is found in the secreted. Functionally, recombinant disintegrin rubistatin inhibits ADP-induced platelet aggregation. In addition, it strongly induces apoptosis, and inhibits cell migration and proliferation of the human cancer cell line SK-Mel-28. This is Disintegrin rubistatin from Crotalus ruber ruber (Red diamond rattlesnake).